The primary structure comprises 272 residues: GTP cyclohydrolase FolE2 (272 aa).

This sequence belongs to the GTP cyclohydrolase IV family.

The catalysed reaction is GTP + H2O = 7,8-dihydroneopterin 3'-triphosphate + formate + H(+). It participates in cofactor biosynthesis; 7,8-dihydroneopterin triphosphate biosynthesis; 7,8-dihydroneopterin triphosphate from GTP: step 1/1. Its function is as follows. Converts GTP to 7,8-dihydroneopterin triphosphate. The protein is GTP cyclohydrolase FolE2 of Polynucleobacter asymbioticus (strain DSM 18221 / CIP 109841 / QLW-P1DMWA-1) (Polynucleobacter necessarius subsp. asymbioticus).